The following is a 141-amino-acid chain: Metallothiol transferase FosB (141 aa).

Residues 5-120 (SINHLLFSVS…DGHKFEFHTG (116 aa)) form the VOC domain. Mg(2+) contacts are provided by His-8, His-67, and Glu-116. Glu-116 functions as the Proton donor/acceptor in the catalytic mechanism.

Belongs to the fosfomycin resistance protein family. FosB subfamily. As to quaternary structure, homodimer. It depends on Mg(2+) as a cofactor.

The protein localises to the cytoplasm. Functionally, metallothiol transferase which confers resistance to fosfomycin by catalyzing the addition of a thiol cofactor to fosfomycin. L-cysteine is probably the physiological thiol donor. This chain is Metallothiol transferase FosB, found in Lysinibacillus sphaericus (strain C3-41).